A 377-amino-acid polypeptide reads, in one-letter code: tRNA(Met) cytidine acetate ligase (377 aa).

ATP contacts are provided by residues 7 to 20 (ITEYNPFHNGHLFH), Gly-100, Asn-153, and Arg-178.

The protein belongs to the TmcAL family.

The protein localises to the cytoplasm. It carries out the reaction cytidine(34) in elongator tRNA(Met) + acetate + ATP = N(4)-acetylcytidine(34) in elongator tRNA(Met) + AMP + diphosphate. Functionally, catalyzes the formation of N(4)-acetylcytidine (ac(4)C) at the wobble position of elongator tRNA(Met), using acetate and ATP as substrates. First activates an acetate ion to form acetyladenylate (Ac-AMP) and then transfers the acetyl group to tRNA to form ac(4)C34. The protein is tRNA(Met) cytidine acetate ligase of Staphylococcus epidermidis (strain ATCC 12228 / FDA PCI 1200).